The sequence spans 915 residues: Clathrin coat assembly protein AP180 (915 aa).

The ENTH domain maps to 14–145 (QYSVTGSAVA…FSYRQMAFDF (132 aa)). Disordered regions lie at residues 285-326 (LEGK…DTSP), 391-425 (SVPS…ATTA), and 497-522 (PETS…PSPA). 3 positions are modified to phosphoserine: S296, S300, and S306. Over residues 302 to 324 (LSKSSPATTVTSPNSTPAKTIDT) the composition is skewed to polar residues. O-linked (GlcNAc) threonine glycosylation occurs at T310. S313 is subject to Phosphoserine. Residue T317 is modified to Phosphothreonine. Low complexity-rich tracts occupy residues 410-425 (TTTT…ATTA) and 500-511 (SAPVVTPTASTA). The span at 512–522 (PPVPATAPSPA) shows a compositional bias: pro residues. Phosphoserine occurs at positions 594, 600, 627, 640, and 646. A compositionally biased stretch (low complexity) spans 720–735 (TTPSTSSSSSFDPSGD). The interval 720–765 (TTPSTSSSSSFDPSGDLLMPTMAPSGQPAPVSMVPPSPAMSASKGL) is disordered. Position 775 is a phosphoserine (S775). The tract at residues 817 to 855 (SAGVPPQGTVPPTSSVPPGAGAPSVGQPGAGYGMPPAGT) is disordered. An Asymmetric dimethylarginine; alternate modification is found at R873. Position 873 is an omega-N-methylarginine; alternate (R873). Residues 875–915 (PFGAAAVPGTQLSPSPTPATQSPKKPPAKDPLADLNIKDFL) form a disordered region. Residues 884–896 (TQLSPSPTPATQS) show a composition bias toward polar residues. Basic and acidic residues predominate over residues 901-915 (PAKDPLADLNIKDFL).

This sequence belongs to the PICALM/SNAP91 family. Binds AP2A2. Interacts with AP2B1; clathrin competes with SNAP91. Post-translationally, thr-310 can be modified by the addition of N-acetylglucosamine which can be further phosphorylated. The form with phosphorylated O-linked N-acetylglucosamine is predominant in brain synaptosomes. There is no evidence for direct Thr-310 phosphorylation.

Its subcellular location is the cell membrane. It is found in the membrane. The protein localises to the coated pit. Adaptins are components of the adapter complexes which link clathrin to receptors in coated vesicles. Clathrin-associated protein complexes are believed to interact with the cytoplasmic tails of membrane proteins, leading to their selection and concentration. Binding of AP180 to clathrin triskelia induces their assembly into 60-70 nm coats. The protein is Clathrin coat assembly protein AP180 (Snap91) of Rattus norvegicus (Rat).